Here is a 149-residue protein sequence, read N- to C-terminus: Glycophorin-A (149 aa).

The N-terminal stretch at 1 to 19 is a signal peptide; that stretch reads MYGKIIFVLLLSAIVSISA. Residues 20-90 are Extracellular-facing; it reads SSTTEVAMHT…QLVHRFSEPE (71 aa). Residue Ser-21 is glycosylated (O-linked (GalNAc...) serine). Thr-22, Thr-23, and Thr-29 each carry an O-linked (GalNAc...) threonine glycan. The O-linked (GalNAc...) serine glycan is linked to Ser-30. O-linked (GalNAc...) threonine glycosylation occurs at Thr-31. Residue Ser-32 is glycosylated (O-linked (GalNAc...) serine). An O-linked (GalNAc...) threonine glycan is attached at Thr-35. Ser-37 and Ser-40 each carry an O-linked (GalNAc...) serine glycan. Residue Thr-43 is glycosylated (O-linked (GalNAc...) threonine). An O-linked (GalNAc...) serine glycan is attached at Ser-44. Thr-51 and Thr-55 each carry an O-linked (GalNAc...) threonine glycan. Ser-62 is a glycosylation site (O-linked (GalNAc...) serine). O-linked (GalNAc...) threonine glycosylation occurs at Thr-68. Residues 91–113 traverse the membrane as a helical segment; the sequence is ITLIIFGVMAGVIGTILLIYYSI. Residues 114-149 lie on the Cytoplasmic side of the membrane; the sequence is RRLIKKSPSDVKPLPSPDTDVPLSSVEIENPETSDQ. Positions 122-149 are disordered; it reads SDVKPLPSPDTDVPLSSVEIENPETSDQ. Ser-137 and Ser-147 each carry phosphoserine.

It belongs to the glycophorin-A family. Homodimer. Component of the ankyrin-1 complex in the erythrocyte, composed of ANK1, RHCE, RHAG, SLC4A1, EPB42, GYPA, GYPB and AQP1. Interacts with SLC4A1; a GYPA monomer is bound at each end of the SLC4A1 dimer forming a heterotetramer.

It localises to the cell membrane. Its function is as follows. Component of the ankyrin-1 complex, a multiprotein complex involved in the stability and shape of the erythrocyte membrane. Glycophorin A is the major intrinsic membrane protein of the erythrocyte. The N-terminal glycosylated segment, which lies outside the erythrocyte membrane, has MN blood group receptors. Appears to be important for the function of SLC4A1 and is required for high activity of SLC4A1. May be involved in translocation of SLC4A1 to the plasma membrane. This chain is Glycophorin-A, found in Pan troglodytes (Chimpanzee).